Consider the following 466-residue polypeptide: MKLQISGLLLVTAVAYATIEAPEEFVSLAEMEDTLLRNLFRGYQKWVRPILHANDTITVRFGLKISQLVDVDEKNHLMTTNVWLWQEWTDYKLRWNPEDYGGITSIRVPSETIWLPDIVLYENADGRFEGSLMTKAIVRFNGTIMWTPPASYKSSCTMDVTFFPFDRQNCSMKFGSWTYDGTMVDLTLLDAYVDRKDFFDNGEWEILNATGQRGSRRDGIYSYPYVTYSFILKRLPLFYTLFLIIPCLGLSFLTVLVFYLPSDEGEKLLLSTSVLVSLTVFLLVIEEIIPSSSKVIPLIGEYLLFIMIFVTFSIIVTLFVINVHHRSSATYHPMAPWVKSLFLQRLPRLLCMRGHTDRYQYPDIELRSPELKRGMKKGQQKSAGGGRGGLKEDENQAWIALLEKATHSVHYISRHIKKEHFIREVVQDWKFVAQVLDRIFLWVFLTASVLGTILIFTPALHMYLST.

The first 28 residues, M1–L28, serve as a signal peptide directing secretion. Residues A29–L235 lie on the Extracellular side of the membrane. 4 N-linked (GlcNAc...) asparagine glycosylation sites follow: N54, N141, N169, and N208. A disulfide bridge links C156 with C170. A run of 3 helical transmembrane segments spans residues P236–L260, L268–I285, and Y302–V323. At H324 to R438 the chain is on the cytoplasmic side. A helical membrane pass occupies residues I439 to F456.

The protein belongs to the ligand-gated ion channel (TC 1.A.9) family. Acetylcholine receptor (TC 1.A.9.1) subfamily. In terms of assembly, neuronal AChR seems to be composed of two different type of subunits: alpha and non-alpha (beta). Retina, tectum and brain.

Its subcellular location is the postsynaptic cell membrane. The protein resides in the cell membrane. Its function is as follows. After binding acetylcholine, the AChR responds by an extensive change in conformation that affects all subunits and leads to opening of an ion-conducting channel across the plasma membrane. The chain is Neuronal acetylcholine receptor subunit non-alpha-3 from Carassius auratus (Goldfish).